Here is a 527-residue protein sequence, read N- to C-terminus: Probable protein kinase UbiB (527 aa).

Positions 118-501 (DFERVPVASA…QKRTNRLLQG (384 aa)) constitute a Protein kinase domain. Residues 124-132 (VASASIAQV) and Lys-150 each bind ATP. The active-site Proton acceptor is Asp-285. The helical transmembrane segment at 502–522 (LLMFGVAVGVGAVLARAWLAI) threads the bilayer.

This sequence belongs to the ABC1 family. UbiB subfamily.

It localises to the cell inner membrane. The protein operates within cofactor biosynthesis; ubiquinone biosynthesis [regulation]. Functionally, is probably a protein kinase regulator of UbiI activity which is involved in aerobic coenzyme Q (ubiquinone) biosynthesis. This is Probable protein kinase UbiB from Paraburkholderia phymatum (strain DSM 17167 / CIP 108236 / LMG 21445 / STM815) (Burkholderia phymatum).